The following is a 340-amino-acid chain: Flap endonuclease 1 (340 aa).

An N-domain region spans residues 1–98; it reads MGVPIGEIIP…KELEKRREAR (98 aa). Mg(2+) is bound by residues D27, D80, E152, E154, D173, D175, and D236. An I-domain region spans residues 116-258; sequence EARKYAQRAT…KALEIVRHSK (143 aa). An interaction with PCNA region spans residues 330-338; that stretch reads KQSTLESWF.

The protein belongs to the XPG/RAD2 endonuclease family. FEN1 subfamily. In terms of assembly, interacts with PCNA. PCNA stimulates the nuclease activity without altering cleavage specificity. Mg(2+) is required as a cofactor.

In terms of biological role, structure-specific nuclease with 5'-flap endonuclease and 5'-3' exonuclease activities involved in DNA replication and repair. During DNA replication, cleaves the 5'-overhanging flap structure that is generated by displacement synthesis when DNA polymerase encounters the 5'-end of a downstream Okazaki fragment. Binds the unpaired 3'-DNA end and kinks the DNA to facilitate 5' cleavage specificity. Cleaves one nucleotide into the double-stranded DNA from the junction in flap DNA, leaving a nick for ligation. Also involved in the base excision repair (BER) pathway. Acts as a genome stabilization factor that prevents flaps from equilibrating into structures that lead to duplications and deletions. Also possesses 5'-3' exonuclease activity on nicked or gapped double-stranded DNA. In Pyrococcus furiosus (strain ATCC 43587 / DSM 3638 / JCM 8422 / Vc1), this protein is Flap endonuclease 1.